Here is a 262-residue protein sequence, read N- to C-terminus: Phosphate import ATP-binding protein PstB (262 aa).

An ABC transporter domain is found at 16-257; the sequence is IDVRNLNFYY…PHRKETEDYI (242 aa). Position 48–55 (48–55) interacts with ATP; it reads GPSGCGKS.

It belongs to the ABC transporter superfamily. Phosphate importer (TC 3.A.1.7) family. As to quaternary structure, the complex is composed of two ATP-binding proteins (PstB), two transmembrane proteins (PstC and PstA) and a solute-binding protein (PstS).

The protein resides in the cell inner membrane. It carries out the reaction phosphate(out) + ATP + H2O = ADP + 2 phosphate(in) + H(+). Its function is as follows. Part of the ABC transporter complex PstSACB involved in phosphate import. Responsible for energy coupling to the transport system. This is Phosphate import ATP-binding protein PstB from Cupriavidus metallidurans (strain ATCC 43123 / DSM 2839 / NBRC 102507 / CH34) (Ralstonia metallidurans).